Reading from the N-terminus, the 259-residue chain is Imidazole glycerol phosphate synthase subunit HisF (259 aa).

Active-site residues include D11 and D130.

This sequence belongs to the HisA/HisF family. As to quaternary structure, heterodimer of HisH and HisF.

It is found in the cytoplasm. The catalysed reaction is 5-[(5-phospho-1-deoxy-D-ribulos-1-ylimino)methylamino]-1-(5-phospho-beta-D-ribosyl)imidazole-4-carboxamide + L-glutamine = D-erythro-1-(imidazol-4-yl)glycerol 3-phosphate + 5-amino-1-(5-phospho-beta-D-ribosyl)imidazole-4-carboxamide + L-glutamate + H(+). It participates in amino-acid biosynthesis; L-histidine biosynthesis; L-histidine from 5-phospho-alpha-D-ribose 1-diphosphate: step 5/9. In terms of biological role, IGPS catalyzes the conversion of PRFAR and glutamine to IGP, AICAR and glutamate. The HisF subunit catalyzes the cyclization activity that produces IGP and AICAR from PRFAR using the ammonia provided by the HisH subunit. This Polaromonas naphthalenivorans (strain CJ2) protein is Imidazole glycerol phosphate synthase subunit HisF.